The primary structure comprises 465 residues: Macrophage metalloelastase (465 aa).

The first 21 residues, 1-21 (MKFLLVLVLLVSLQVSACGAA), serve as a signal peptide directing secretion. Residues 22 to 101 (PMNESEFAEW…DVQHLRAVPQ (80 aa)) constitute a propeptide, activation peptide. The short motif at 86–93 (SRCGVPDV) is the Cysteine switch element. Cys-88 is a Zn(2+) binding site. Ca(2+) is bound by residues Asp-120 and Asp-154. Zn(2+) contacts are provided by His-164 and Asp-166. Residues Asp-171, Gly-172, Gly-174, and Thr-176 each coordinate Ca(2+). Position 179 (His-179) interacts with Zn(2+). Residues Gly-186 and Asp-190 each coordinate Ca(2+). Position 192 (His-192) interacts with Zn(2+). Residues Asp-194, Glu-195, and Glu-197 each coordinate Ca(2+). His-214 is a Zn(2+) binding site. Glu-215 is a catalytic residue. Residues His-218 and His-224 each contribute to the Zn(2+) site. Residues Cys-278 and Cys-465 are joined by a disulfide bond. Hemopexin repeat units lie at residues 281–324 (SLSF…WPTI), 325–371 (PSGI…GFPA), 373–421 (VKKI…FPGI), and 422–465 (RPKI…WFGC). Asp-285 contributes to the Ca(2+) binding site. Asn-313 carries an N-linked (GlcNAc...) asparagine glycan. Asp-377 and Asp-426 together coordinate Ca(2+).

This sequence belongs to the peptidase M10A family. The cofactor is Ca(2+). It depends on Zn(2+) as a cofactor.

It is found in the secreted. The protein localises to the extracellular space. The protein resides in the extracellular matrix. It catalyses the reaction Hydrolysis of soluble and insoluble elastin. Specific cleavages are also produced at 14-Ala-|-Leu-15 and 16-Tyr-|-Leu-17 in the B chain of insulin.. Its function is as follows. May be involved in tissue injury and remodeling. Has significant elastolytic activity. Can accept large and small amino acids at the P1' site, but has a preference for leucine. Aromatic or hydrophobic residues are preferred at the P1 site, with small hydrophobic residues (preferably alanine) occupying P3. This chain is Macrophage metalloelastase (Mmp12), found in Rattus norvegicus (Rat).